A 214-amino-acid polypeptide reads, in one-letter code: Hypoxanthine-guanine phosphoribosyltransferase (214 aa).

Ala-2 carries the post-translational modification N-acetylalanine. Lys-69 lines the GMP pocket. Lys-103 carries the N6-acetyllysine modification. Lys-115 is covalently cross-linked (Glycyl lysine isopeptide (Lys-Gly) (interchain with G-Cter in SUMO1); alternate). Lys-115 is covalently cross-linked (Glycyl lysine isopeptide (Lys-Gly) (interchain with G-Cter in SUMO2); alternate). GMP is bound by residues 134-142 (EDIIDTGKT), Lys-166, 186-188 (KFV), and Asp-194. Asp-138 (proton acceptor) is an active-site residue. Thr-142 is modified (phosphothreonine). Asp-194 is a Mg(2+) binding site.

This sequence belongs to the purine/pyrimidine phosphoribosyltransferase family. In terms of assembly, homotetramer. Mg(2+) is required as a cofactor.

The protein localises to the cytoplasm. It catalyses the reaction IMP + diphosphate = hypoxanthine + 5-phospho-alpha-D-ribose 1-diphosphate. The catalysed reaction is GMP + diphosphate = guanine + 5-phospho-alpha-D-ribose 1-diphosphate. Its pathway is purine metabolism; IMP biosynthesis via salvage pathway; IMP from hypoxanthine: step 1/1. Converts guanine to guanosine monophosphate, and hypoxanthine to inosine monophosphate. Transfers the 5-phosphoribosyl group from 5-phosphoribosylpyrophosphate onto the purine. Plays a central role in the generation of purine nucleotides through the purine salvage pathway. This Mus spretus (Western Mediterranean mouse) protein is Hypoxanthine-guanine phosphoribosyltransferase (Hprt1).